The primary structure comprises 283 residues: Nucleoid occlusion protein (283 aa).

The disordered stretch occupies residues 1–26 (MKQPFSRLFGFGDKQDQEMETGKQEE). Over residues 13-26 (DKQDQEMETGKQEE) the composition is skewed to basic and acidic residues. Residues 143 to 162 (ESLAQRLGKGQSTIANKLRL) constitute a DNA-binding region (H-T-H motif).

It belongs to the ParB family.

The protein resides in the cytoplasm. Its subcellular location is the nucleoid. Its function is as follows. Effects nucleoid occlusion by binding relatively nonspecifically to DNA and preventing the assembly of the division machinery in the vicinity of the nucleoid, especially under conditions that disturb the cell cycle. It helps to coordinate cell division and chromosome segregation by preventing the formation of the Z ring through the nucleoid, which would cause chromosome breakage. The polypeptide is Nucleoid occlusion protein (Halalkalibacterium halodurans (strain ATCC BAA-125 / DSM 18197 / FERM 7344 / JCM 9153 / C-125) (Bacillus halodurans)).